The chain runs to 291 residues: uncharacterized protein (291 aa).

The next 10 membrane-spanning stretches (helical) occupy residues 1-21 (MHNLIFAILCSVAVSVLLKIA), 26-46 (IIIEQAIAFNYITAITFSYFL), 67-87 (PIFLALGLLLPSVFIIMSKAV), 95-115 (SDAAQRLSLFLPILAAFLIFH), 117-137 (TLSQSKIIGVVLAFIGLFCLL), 149-169 (FKGVLGLIGVWFGYGIIDILF), 179-199 (FPATLFISFSLAACVMFIYLF), 208-228 (SSVIGGIVLGVLNFFNILFYI), 241-261 (VFAGMNIGVICLGTITGALVF), and 270-290 (WLGIIFSLSAIFCLYYLDKII). The region spanning 107–138 (ILAAFLIFHETLSQSKIIGVVLAFIGLFCLLT) is the EamA domain.

The protein localises to the cell membrane. This is an uncharacterized protein from Haemophilus influenzae (strain ATCC 51907 / DSM 11121 / KW20 / Rd).